The following is a 274-amino-acid chain: 2,3,4,5-tetrahydropyridine-2,6-dicarboxylate N-succinyltransferase (274 aa).

The substrate site is built by arginine 106 and aspartate 143.

The protein belongs to the transferase hexapeptide repeat family. As to quaternary structure, homotrimer.

The protein resides in the cytoplasm. It catalyses the reaction (S)-2,3,4,5-tetrahydrodipicolinate + succinyl-CoA + H2O = (S)-2-succinylamino-6-oxoheptanedioate + CoA. The protein operates within amino-acid biosynthesis; L-lysine biosynthesis via DAP pathway; LL-2,6-diaminopimelate from (S)-tetrahydrodipicolinate (succinylase route): step 1/3. In Cupriavidus metallidurans (strain ATCC 43123 / DSM 2839 / NBRC 102507 / CH34) (Ralstonia metallidurans), this protein is 2,3,4,5-tetrahydropyridine-2,6-dicarboxylate N-succinyltransferase.